A 249-amino-acid polypeptide reads, in one-letter code: (S)-1-Phenylethanol dehydrogenase (249 aa).

NAD(+) is bound by residues 17 to 19 (NGI), D38, 61 to 63 (CDV), N89, and Y93. Residue S141 coordinates substrate. The active-site Proton acceptor is Y154. Residues K158, 184–187 (PSLV), and T191 contribute to the NAD(+) site.

It belongs to the short-chain dehydrogenases/reductases (SDR) family. Homotetramer.

The catalysed reaction is (S)-1-phenylethanol + NAD(+) = acetophenone + NADH + H(+). Functionally, catalyzes the NAD-dependent stereospecific oxidation of (S)-1-phenylethanol to acetophenone in the degradation of ethylbenzene. The chain is (S)-1-Phenylethanol dehydrogenase (ped) from Aromatoleum aromaticum (strain DSM 19018 / LMG 30748 / EbN1) (Azoarcus sp. (strain EbN1)).